A 116-amino-acid chain; its full sequence is Large ribosomal subunit protein bL19 (116 aa).

Belongs to the bacterial ribosomal protein bL19 family.

Functionally, this protein is located at the 30S-50S ribosomal subunit interface and may play a role in the structure and function of the aminoacyl-tRNA binding site. The polypeptide is Large ribosomal subunit protein bL19 (Pseudomonas putida (strain ATCC 700007 / DSM 6899 / JCM 31910 / BCRC 17059 / LMG 24140 / F1)).